The following is an 85-amino-acid chain: UPF0291 protein SPH_1589 (85 aa).

The disordered stretch occupies residues 62 to 85 (TPEKLRQVQREKGLHGRSLDDPNS).

The protein belongs to the UPF0291 family.

It is found in the cytoplasm. The protein is UPF0291 protein SPH_1589 of Streptococcus pneumoniae (strain Hungary19A-6).